Reading from the N-terminus, the 472-residue chain is Tryptophan--tRNA ligase, cytoplasmic (472 aa).

Residues 9–65 (SPLELFNSIATQGELVRSLKAGNASKDEIDSAVKMLLSLKMSYKAAMGEDYKANCPP) enclose the WHEP-TRS domain. K155 carries the post-translational modification N6-succinyllysine. A 'HIGH' region motif is present at residues 165 to 174 (PSSEAMHVGH). The 'KMSKS' region signature appears at 350 to 354 (KMSAS). S352 carries the post-translational modification Phosphoserine.

This sequence belongs to the class-I aminoacyl-tRNA synthetase family. As to quaternary structure, homodimer. Interacts with oxidized form of GAPDH. Post-translationally, proteolytic cleavage generates 2 forms; T1-TrpRS and T2-TrpRS.

It is found in the cytoplasm. The enzyme catalyses tRNA(Trp) + L-tryptophan + ATP = L-tryptophyl-tRNA(Trp) + AMP + diphosphate + H(+). Its function is as follows. Catalyzes the attachment of tryptophan to tRNA(Trp) in a two-step reaction: tryptophan is first activated by ATP to form Trp-AMP and then transferred to the acceptor end of the tRNA(Trp). Could also possess an angiostatic activity. In Pongo abelii (Sumatran orangutan), this protein is Tryptophan--tRNA ligase, cytoplasmic (WARS1).